Consider the following 262-residue polypeptide: Glycine and serine-rich protein 1 (262 aa).

The signal sequence occupies residues 1–21 (MVIKTSLTVLILGVLIAEVFC). N59 carries an N-linked (GlcNAc...) asparagine glycan. The segment at 172–212 (SNGGWGAETGSSGGMNSQSSGSQSGSWGSSSGSWGGSSGSM) is disordered. Residues 174 to 184 (GGWGAETGSSG) show a composition bias toward gly residues. The span at 185-203 (GMNSQSSGSQSGSWGSSSG) shows a compositional bias: low complexity.

In terms of tissue distribution, component of the acid-insoluble and acid-soluble organic matrix of calcified layers of the shell (at protein level).

The protein resides in the secreted. The chain is Glycine and serine-rich protein 1 from Lottia gigantea (Giant owl limpet).